A 246-amino-acid polypeptide reads, in one-letter code: tRNA (guanine-N(1)-)-methyltransferase (246 aa).

Gly114 lines the S-adenosyl-L-methionine pocket.

Belongs to the RNA methyltransferase TrmD family. Homodimer.

It localises to the cytoplasm. The catalysed reaction is guanosine(37) in tRNA + S-adenosyl-L-methionine = N(1)-methylguanosine(37) in tRNA + S-adenosyl-L-homocysteine + H(+). In terms of biological role, specifically methylates guanosine-37 in various tRNAs. The protein is tRNA (guanine-N(1)-)-methyltransferase of Novosphingobium aromaticivorans (strain ATCC 700278 / DSM 12444 / CCUG 56034 / CIP 105152 / NBRC 16084 / F199).